Here is a 130-residue protein sequence, read N- to C-terminus: Small ribosomal subunit protein uS9 (130 aa).

The disordered stretch occupies residues 106-130 (RDSRKVERKKPGLKKARKASQFSKR). Over residues 111–130 (VERKKPGLKKARKASQFSKR) the composition is skewed to basic residues.

It belongs to the universal ribosomal protein uS9 family.

This Streptococcus pneumoniae serotype 2 (strain D39 / NCTC 7466) protein is Small ribosomal subunit protein uS9.